The sequence spans 156 residues: SsrA-binding protein (156 aa).

Positions 131-156 are disordered; the sequence is YDKRQTLREQQDKREALRVMRERNRG.

Belongs to the SmpB family.

It is found in the cytoplasm. Functionally, required for rescue of stalled ribosomes mediated by trans-translation. Binds to transfer-messenger RNA (tmRNA), required for stable association of tmRNA with ribosomes. tmRNA and SmpB together mimic tRNA shape, replacing the anticodon stem-loop with SmpB. tmRNA is encoded by the ssrA gene; the 2 termini fold to resemble tRNA(Ala) and it encodes a 'tag peptide', a short internal open reading frame. During trans-translation Ala-aminoacylated tmRNA acts like a tRNA, entering the A-site of stalled ribosomes, displacing the stalled mRNA. The ribosome then switches to translate the ORF on the tmRNA; the nascent peptide is terminated with the 'tag peptide' encoded by the tmRNA and targeted for degradation. The ribosome is freed to recommence translation, which seems to be the essential function of trans-translation. The chain is SsrA-binding protein from Arthrobacter sp. (strain FB24).